The primary structure comprises 452 residues: Tubulin alpha-6 chain (452 aa).

Residues Gln-11, Glu-69, Ser-138, Gly-142, Thr-143, Thr-177, Asn-204, and Asn-226 each coordinate GTP. Residue Glu-69 participates in Mg(2+) binding. Glu-252 is a catalytic residue.

The protein belongs to the tubulin family. As to quaternary structure, dimer of alpha and beta chains. A typical microtubule is a hollow water-filled tube with an outer diameter of 25 nm and an inner diameter of 15 nM. Alpha-beta heterodimers associate head-to-tail to form protofilaments running lengthwise along the microtubule wall with the beta-tubulin subunit facing the microtubule plus end conferring a structural polarity. Microtubules usually have 13 protofilaments but different protofilament numbers can be found in some organisms and specialized cells. Mg(2+) serves as cofactor.

The protein localises to the cytoplasm. It is found in the cytoskeleton. Its subcellular location is the spindle. It carries out the reaction GTP + H2O = GDP + phosphate + H(+). Its function is as follows. Tubulin is the major constituent of microtubules, a cylinder consisting of laterally associated linear protofilaments composed of alpha- and beta-tubulin heterodimers. Microtubules grow by the addition of GTP-tubulin dimers to the microtubule end, where a stabilizing cap forms. Below the cap, tubulin dimers are in GDP-bound state, owing to GTPase activity of alpha-tubulin. In Naegleria pringsheimi (Amoeba), this protein is Tubulin alpha-6 chain (TUBA6).